The primary structure comprises 532 residues: Putative cysteine desulfurase PbSufS (532 aa).

The signal sequence occupies residues 1-18; that stretch reads MNNESICILLLLFVKITS. Residue Lys-286 is modified to N6-(pyridoxal phosphate)lysine. Cys-480 (cysteine persulfide intermediate) is an active-site residue.

This sequence belongs to the class-V pyridoxal-phosphate-dependent aminotransferase family. Csd subfamily. Monomer. Interacts with SufE; interaction enhances cysteine desulfurase activity of SufS. Requires pyridoxal 5'-phosphate as cofactor.

The protein localises to the plastid. It is found in the apicoplast. The catalysed reaction is (sulfur carrier)-H + L-cysteine = (sulfur carrier)-SH + L-alanine. The protein operates within cofactor biosynthesis; iron-sulfur cluster biosynthesis. In terms of biological role, catalyzes sulfur activation and mobilization in sulfur mobilization (SUF) pathway for iron-sulfur (Fe-S) cluster biogenesis. Active when in complex with a partner protein SufE. Required for apicoplast maintenance. Plays a role in the development of sporozoites in oocysts in mosquitoes. The polypeptide is Putative cysteine desulfurase PbSufS (Plasmodium berghei (strain Anka)).